Here is a 173-residue protein sequence, read N- to C-terminus: Phosphopantetheine adenylyltransferase (173 aa).

A substrate-binding site is contributed by S9. ATP is bound by residues 9-10 and H17; that span reads SF. 3 residues coordinate substrate: K41, T73, and R87. Residues 88–90, E98, and 123–129 contribute to the ATP site; these read GVR and YQYLSSS.

Belongs to the bacterial CoaD family. In terms of assembly, homohexamer. Mg(2+) serves as cofactor.

It is found in the cytoplasm. The enzyme catalyses (R)-4'-phosphopantetheine + ATP + H(+) = 3'-dephospho-CoA + diphosphate. It functions in the pathway cofactor biosynthesis; coenzyme A biosynthesis; CoA from (R)-pantothenate: step 4/5. Its function is as follows. Reversibly transfers an adenylyl group from ATP to 4'-phosphopantetheine, yielding dephospho-CoA (dPCoA) and pyrophosphate. The polypeptide is Phosphopantetheine adenylyltransferase (Limosilactobacillus fermentum (strain NBRC 3956 / LMG 18251) (Lactobacillus fermentum)).